A 559-amino-acid chain; its full sequence is Protein pp71 (559 aa).

Residue Cys218 is modified to S-nitrosocysteine; by host. Thr223 carries the post-translational modification Phosphothreonine. Disordered regions lie at residues 404–440 and 530–559; these read EFLP…TPLS and SSTL…RPRI. Positions 415 to 430 are enriched in acidic residues; that stretch reads TEEEEEEEEEDDEDDL. Low complexity-rich tracts occupy residues 431–440 and 543–559; these read SSTPTPTPLS and PIST…RPRI.

It belongs to the herpesviridae pp71 family. Interacts with the host protein DAXX; this interaction takes place at ND10 and induces the reversal of DAXX-mediated repression of viral transcription. Interacts with UL35. Interacts with host TMEM173/STING1; this interaction inhibits the cGAS/STING pathway. Interacts with host RB1; this interaction mediates RB1 proteasomal degradation. In terms of processing, S-nitrosylation limits ability to undermine the cGAS/STING antiviral pathway.

It is found in the virion tegument. The protein localises to the host nucleus. The protein resides in the host endoplasmic reticulum. Stimulates viral immediate-early (IE) transcription. Plays a role in the inhibition of the host innate repsonse by targeting STING1 and thus the cGAS-STING pathway. Also counteracts host DAXX-mediated repression of viral transcription. Displaces a DAXX-binding protein, ATRX, from nuclear domain 10 sites (ND10) shortly after infection. Increases the basal level of SUMOylated DAXX in infected cells. Stimulates quiescent cells to re-enter the cell cycle, proceed through G1 and enter the S phase. Interacts with hypophosphorylated forms of RB1 and induces their degradation by the proteasome without involving ubiquitin conjugation. The polypeptide is Protein pp71 (UL82) (Human cytomegalovirus (strain AD169) (HHV-5)).